A 451-amino-acid polypeptide reads, in one-letter code: Exodeoxyribonuclease 7 large subunit (451 aa).

Belongs to the XseA family. Heterooligomer composed of large and small subunits.

It is found in the cytoplasm. The catalysed reaction is Exonucleolytic cleavage in either 5'- to 3'- or 3'- to 5'-direction to yield nucleoside 5'-phosphates.. Its function is as follows. Bidirectionally degrades single-stranded DNA into large acid-insoluble oligonucleotides, which are then degraded further into small acid-soluble oligonucleotides. The chain is Exodeoxyribonuclease 7 large subunit from Neisseria meningitidis serogroup C / serotype 2a (strain ATCC 700532 / DSM 15464 / FAM18).